Here is a 255-residue protein sequence, read N- to C-terminus: NAD-dependent protein deacylase (255 aa).

Residues 1-253 form the Deacetylase sirtuin-type domain; sequence MEFSDELLAS…PLLLQALRRS (253 aa). An NAD(+)-binding site is contributed by 22–42; that stretch reads GAGVSAESGIPTFRDALTGFW. Tyr-67 and Arg-70 together coordinate substrate. 101–104 is an NAD(+) binding site; sequence QNVD. The Proton acceptor role is filled by His-119. Cys-127, Cys-130, Cys-155, and Cys-158 together coordinate Zn(2+). NAD(+) is bound by residues 195-197, 221-223, and Ala-239; these read GTS and NPA.

The protein belongs to the sirtuin family. Class III subfamily. Requires Zn(2+) as cofactor.

Its subcellular location is the cytoplasm. It catalyses the reaction N(6)-acetyl-L-lysyl-[protein] + NAD(+) + H2O = 2''-O-acetyl-ADP-D-ribose + nicotinamide + L-lysyl-[protein]. The enzyme catalyses N(6)-succinyl-L-lysyl-[protein] + NAD(+) + H2O = 2''-O-succinyl-ADP-D-ribose + nicotinamide + L-lysyl-[protein]. NAD-dependent lysine deacetylase and desuccinylase that specifically removes acetyl and succinyl groups on target proteins. Modulates the activities of several proteins which are inactive in their acylated form. The protein is NAD-dependent protein deacylase of Methylococcus capsulatus (strain ATCC 33009 / NCIMB 11132 / Bath).